The chain runs to 438 residues: Histidine--tRNA ligase (438 aa).

This sequence belongs to the class-II aminoacyl-tRNA synthetase family. As to quaternary structure, homodimer.

Its subcellular location is the cytoplasm. It carries out the reaction tRNA(His) + L-histidine + ATP = L-histidyl-tRNA(His) + AMP + diphosphate + H(+). The chain is Histidine--tRNA ligase from Aromatoleum aromaticum (strain DSM 19018 / LMG 30748 / EbN1) (Azoarcus sp. (strain EbN1)).